The sequence spans 302 residues: Protoheme IX farnesyltransferase 2 (302 aa).

The next 9 helical transmembrane spans lie at 14–34 (IIFGNLISAAGGFLLAAQGSV), 36–56 (WWLLAATVVGLSLVVASGCAI), 85–105 (AALAHGVVLGLAGFALLWFCT), 108–128 (LATGCVLFGFVIYVGVYSLYM), 133–153 (VYGTLVGSLSGAVPPVAGYCA), 163–183 (AILLLMFSLWQMPHSYAIAIF), 209–229 (IVLYILAFAAATVMLVFGGYA), 230–250 (GYGYLAVAVATSLWWLKMALS), and 264–284 (QVFFFSIITITSLSVMMAVDG).

This sequence belongs to the UbiA prenyltransferase family. Protoheme IX farnesyltransferase subfamily.

The protein localises to the cell inner membrane. It carries out the reaction heme b + (2E,6E)-farnesyl diphosphate + H2O = Fe(II)-heme o + diphosphate. Its pathway is porphyrin-containing compound metabolism; heme O biosynthesis; heme O from protoheme: step 1/1. Converts heme B (protoheme IX) to heme O by substitution of the vinyl group on carbon 2 of heme B porphyrin ring with a hydroxyethyl farnesyl side group. In Chromobacterium violaceum (strain ATCC 12472 / DSM 30191 / JCM 1249 / CCUG 213 / NBRC 12614 / NCIMB 9131 / NCTC 9757 / MK), this protein is Protoheme IX farnesyltransferase 2.